The primary structure comprises 690 residues: Glycine--tRNA ligase beta subunit (690 aa).

It belongs to the class-II aminoacyl-tRNA synthetase family. Tetramer of two alpha and two beta subunits.

The protein localises to the cytoplasm. The enzyme catalyses tRNA(Gly) + glycine + ATP = glycyl-tRNA(Gly) + AMP + diphosphate. The chain is Glycine--tRNA ligase beta subunit from Buchnera aphidicola subsp. Acyrthosiphon pisum (strain 5A).